Here is a 91-residue protein sequence, read N- to C-terminus: DNA-binding protein HU (91 aa).

It belongs to the bacterial histone-like protein family.

Histone-like DNA-binding protein which is capable of wrapping DNA to stabilize it, and thus to prevent its denaturation under extreme environmental conditions. Also seems to act as a fortuitous virulence factor in delayed sequelae by binding to heparan sulfate-proteoglycans in the extracellular matrix of target organs and acting as a nidus for in situ immune complex formation. This Streptococcus downei (Streptococcus sobrinus) protein is DNA-binding protein HU (hup).